Consider the following 315-residue polypeptide: Eukaryotic translation initiation factor 2 subunit 1 (315 aa).

The S1 motif domain maps to 17–88 (EDVVMVNVRS…EKGYIDLSKR (72 aa)). Ser49 carries the post-translational modification Phosphoserine; by HRI. Phosphoserine is present on Ser52. At Lys141 the chain carries N6-acetyllysine. Ser158 carries the phosphoserine modification. 2 positions are modified to phosphothreonine: Thr279 and Thr281. Positions 292 to 315 (RLERENAEVDGDDDAEEMEAKAED) are disordered. A compositionally biased stretch (acidic residues) spans 299–308 (EVDGDDDAEE).

The protein belongs to the eIF-2-alpha family. In terms of assembly, eukaryotic translation initiation factor 2 eIF2 is a heterotrimeric complex composed of an alpha (EIF2S1), a beta (EIF2S2) and a gamma (EIF2S3) chain. eIF2 is member of the 43S pre-initiation complex (43S PIC). eIF2 forms a complex with at least CELF1/CUGBP1, CALR, CALR3, EIF2S1, EIF2S2, HSP90B1 and HSPA5. Interaction with METAP2 protects EIF2S1 from inhibitory phosphorylation. Interacts with ABCF1. Associates with ribosomes. Interacts with DDX3X in an RNA-independent manner. Phosphorylation at Ser-49 and Ser-52 stabilizes the eIF-2/GDP/eIF2B complex and prevents GDP/GTP exchange reaction, thus impairing the recycling of eIF-2 between successive rounds of initiation and leading to global inhibition of translation, while concomitantly initiating the preferential translation of integrated stress response (ISR)-specific mRNAs. Substrate for at least 4 kinases: EIF2AK1/HRI, EIF2AK2/PKR, EIF2AK3/PERK and EIF2AK4/GCN2. Phosphorylation at Ser-52 by the EIF2AK3/PERK protein kinase occurs in response to the unfolded protein response. Phosphorylation on Ser-52 by the EIF2AK4/GCN2 protein kinase occurs in response to amino acid starvation and UV irradiation. Phosphorylation at Ser-52 by EIF2AK1/HRI in response to mitochondrial damage promotes relocalization to the mitochondrial surface.

The protein resides in the cytoplasm. It is found in the stress granule. It localises to the cytosol. The protein localises to the mitochondrion. Activity is regulated by phosphorylation at Ser-49 and Ser-52, which stabilizes the eIF2/GDP/eIF2B complex and prevents the eIF2B-mediated exchange of GDP for GTP, thereby preventing the formation of the 43S pre-initiation complex (43S PIC). This results in the global attenuation of 5' cap-dependent protein synthesis and concomitant translation of ISR-specific mRNAs that contain a short upstream open reading frame (uORF) in their 5' UTR, such as ATF4, ATF5, DDIT3/CHOP and PPP1R15A/GADD34. Member of the eIF2 complex that functions in the early steps of protein synthesis by forming a ternary complex with GTP and initiator tRNA. This complex binds to a 40S ribosomal subunit, followed by mRNA binding to form a 43S pre-initiation complex. Junction of the 60S ribosomal subunit to form the 80S initiation complex is preceded by hydrolysis of the GTP bound to eIF2 and release of an eIF2-GDP binary complex. In order for eIF2 to recycle and catalyze another round of initiation, the GDP bound to eIF2 must exchange with GTP by way of a reaction catalyzed by eIF2B. EIF2S1/eIF2-alpha is a key component of the integrated stress response (ISR), required for adaptation to various stress: phosphorylation by metabolic-stress sensing protein kinases (EIF2AK1/HRI, EIF2AK2/PKR, EIF2AK3/PERK and EIF2AK4/GCN2) in response to stress converts EIF2S1/eIF2-alpha in a global protein synthesis inhibitor, leading to a attenuation of cap-dependent translation, while concomitantly initiating the preferential translation of ISR-specific mRNAs, such as the transcriptional activators ATF4 and QRICH1, and hence allowing ATF4- and QRICH1-mediated reprogramming. EIF2S1/eIF2-alpha also acts as an activator of mitophagy in response to mitochondrial damage: phosphorylation by EIF2AK1/HRI promotes relocalization to the mitochondrial surface, thereby triggering PRKN-independent mitophagy. This is Eukaryotic translation initiation factor 2 subunit 1 (EIF2S1) from Sus scrofa (Pig).